Here is a 763-residue protein sequence, read N- to C-terminus: Phosphoglycerol transferase I (763 aa).

Transmembrane regions (helical) follow at residues 1–21 (MSEL…AWKA), 26–46 (WWFA…ITLF), 77–97 (ILPG…LGWI), and 108–128 (FGYS…SPAF).

The protein belongs to the OpgB family.

It is found in the cell inner membrane. The catalysed reaction is a phosphatidylglycerol + a membrane-derived-oligosaccharide D-glucose = a 1,2-diacyl-sn-glycerol + a membrane-derived-oligosaccharide 6-(glycerophospho)-D-glucose.. Its pathway is glycan metabolism; osmoregulated periplasmic glucan (OPG) biosynthesis. Functionally, transfers a phosphoglycerol residue from phosphatidylglycerol to the membrane-bound nascent glucan backbones. This is Phosphoglycerol transferase I from Escherichia coli (strain UTI89 / UPEC).